The primary structure comprises 222 residues: Peptide methionine sulfoxide reductase MsrA (222 aa).

C60 is a catalytic residue.

This sequence belongs to the MsrA Met sulfoxide reductase family.

The catalysed reaction is L-methionyl-[protein] + [thioredoxin]-disulfide + H2O = L-methionyl-(S)-S-oxide-[protein] + [thioredoxin]-dithiol. It carries out the reaction [thioredoxin]-disulfide + L-methionine + H2O = L-methionine (S)-S-oxide + [thioredoxin]-dithiol. Functionally, has an important function as a repair enzyme for proteins that have been inactivated by oxidation. Catalyzes the reversible oxidation-reduction of methionine sulfoxide in proteins to methionine. This is Peptide methionine sulfoxide reductase MsrA from Pseudomonas putida (strain GB-1).